The following is a 155-amino-acid chain: Transcription antitermination protein NusB (155 aa).

This sequence belongs to the NusB family.

In terms of biological role, involved in transcription antitermination. Required for transcription of ribosomal RNA (rRNA) genes. Binds specifically to the boxA antiterminator sequence of the ribosomal RNA (rrn) operons. The polypeptide is Transcription antitermination protein NusB (Vibrio vulnificus (strain CMCP6)).